Consider the following 181-residue polypeptide: Transmembrane protein 190 (181 aa).

An N-terminal signal peptide occupies residues 1–21 (MVASGIPALSLFLLMQGSVDG). Residues 22–81 (NGIQGFFYPWSCEGDVWDRESCGGQAAIENPNLCLRLRCCYRDGVCYHQRPDETMRRKHM) lie on the Extracellular side of the membrane. In terms of domain architecture, P-type spans 31–71 (WSCEGDVWDRESCGGQAAIENPNLCLRLRCCYRDGVCYHQR). 3 cysteine pairs are disulfide-bonded: C33–C61, C43–C60, and C55–C67. A helical transmembrane segment spans residues 82-102 (WALGWTCGGLLFLISSICLFW). Topologically, residues 103–181 (WAKRRDMLHL…EETEGGEDED (79 aa)) are cytoplasmic. The tract at residues 135 to 181 (TLSDKKTSAGSVPTSLPTEGNADVSGATEGEGTTEGGEETEGGEDED) is disordered. Polar residues predominate over residues 142–152 (SAGSVPTSLPT). The segment covering 170–181 (GGEETEGGEDED) has biased composition (acidic residues).

Its subcellular location is the membrane. In Canis lupus familiaris (Dog), this protein is Transmembrane protein 190 (TMEM190).